The chain runs to 20 residues: Brevinin-1LT (20 aa).

An intrachain disulfide couples C14 to C20.

As to expression, expressed by the skin glands.

The protein resides in the secreted. Functionally, antimicrobial peptide. This chain is Brevinin-1LT, found in Rana latastei (Italian agile frog).